Reading from the N-terminus, the 296-residue chain is Lipoyl synthase (296 aa).

Positions 35, 40, 46, 61, 65, 68, and 274 each coordinate [4Fe-4S] cluster. The Radical SAM core domain maps to Trp47 to Leu263.

Belongs to the radical SAM superfamily. Lipoyl synthase family. Requires [4Fe-4S] cluster as cofactor.

It localises to the cytoplasm. It catalyses the reaction [[Fe-S] cluster scaffold protein carrying a second [4Fe-4S](2+) cluster] + N(6)-octanoyl-L-lysyl-[protein] + 2 oxidized [2Fe-2S]-[ferredoxin] + 2 S-adenosyl-L-methionine + 4 H(+) = [[Fe-S] cluster scaffold protein] + N(6)-[(R)-dihydrolipoyl]-L-lysyl-[protein] + 4 Fe(3+) + 2 hydrogen sulfide + 2 5'-deoxyadenosine + 2 L-methionine + 2 reduced [2Fe-2S]-[ferredoxin]. The protein operates within protein modification; protein lipoylation via endogenous pathway; protein N(6)-(lipoyl)lysine from octanoyl-[acyl-carrier-protein]: step 2/2. In terms of biological role, catalyzes the radical-mediated insertion of two sulfur atoms into the C-6 and C-8 positions of the octanoyl moiety bound to the lipoyl domains of lipoate-dependent enzymes, thereby converting the octanoylated domains into lipoylated derivatives. The polypeptide is Lipoyl synthase (Neorickettsia sennetsu (strain ATCC VR-367 / Miyayama) (Ehrlichia sennetsu)).